The sequence spans 233 residues: Small ribosomal subunit protein uS3 (233 aa).

The 69-residue stretch at 39-107 (VRQFLASELT…PSQINIAEVR (69 aa)) folds into the KH type-2 domain.

The protein belongs to the universal ribosomal protein uS3 family. In terms of assembly, part of the 30S ribosomal subunit. Forms a tight complex with proteins S10 and S14.

In terms of biological role, binds the lower part of the 30S subunit head. Binds mRNA in the 70S ribosome, positioning it for translation. This is Small ribosomal subunit protein uS3 from Baumannia cicadellinicola subsp. Homalodisca coagulata.